A 591-amino-acid polypeptide reads, in one-letter code: Paxillin (591 aa).

Met-1 bears the N-acetylmethionine mark. Positions 3-15 match the LD motif 1 motif; sequence DLDALLADLESTT. The tract at residues 17 to 139 is disordered; that stretch reads HISKRPVFLS…SPTVMSSSLG (123 aa). The residue at position 31 (Tyr-31) is a Phosphotyrosine; by PTK6. Over residues 45 to 54 the composition is skewed to pro residues; it reads VPPPVPPPPS. Residue Ser-83 is modified to Phosphoserine. A Phosphotyrosine modification is found at Tyr-88. Low complexity predominate over residues 89–99; that stretch reads SSSAKNSSASN. The residue at position 106 (Ser-106) is a Phosphoserine. Tyr-118 carries the post-translational modification Phosphotyrosine; by PTK6. Residues Ser-119, Ser-126, and Ser-130 each carry the phosphoserine modification. A compositionally biased stretch (polar residues) spans 121–137; sequence PNKQKSAEPSPTVMSSS. Thr-132 is subject to Phosphothreonine. Phosphoserine is present on residues Ser-137, Ser-140, and Ser-143. The LD motif 2 motif lies at 144–156; that stretch reads ELDRLLLELNAVQ. Residues 156–261 are disordered; the sequence is QHSPPGFPAD…QQQTRISASS (106 aa). A Phosphotyrosine modification is found at Tyr-181. Positions 216–228 match the LD motif 3 motif; the sequence is SVESLLDELESSV. Position 230 is a phosphoserine (Ser-230). A compositionally biased stretch (polar residues) spans 236 to 261; the sequence is TVNQGEMSSPQRVTSSQQQTRISASS. Residue Ser-244 is modified to Phosphoserine; by CDK5. Residues Ser-250, Ser-258, Ser-261, Ser-272, Ser-303, Ser-322, Ser-332, and Ser-340 each carry the phosphoserine modification. Residues 262-315 form a required for binding to PARVA and ILK region; it reads ATRELDELMASLSDFKMQGLEQRVDGERPWAAGWPPSSRQSSPEGQDEGGFMAQ. The LD motif 4 motif lies at 265 to 276; it reads ELDELMASLSDF. The tract at residues 289–338 is disordered; that stretch reads RPWAAGWPPSSRQSSPEGQDEGGFMAQGKTGSSSPPGGLSKPGSQLDSML. Low complexity predominate over residues 315–334; the sequence is QGKTGSSSPPGGLSKPGSQL. The LD motif 5 signature appears at 333–345; it reads QLDSMLGSLQSDL. LIM zinc-binding domains are found at residues 356–415, 416–473, 474–533, and 534–591; these read GVCG…LFSP, RCYY…DMFA, PKCG…RRGS, and LCSG…KLFC. Ser-533 carries the post-translational modification Phosphoserine.

The protein belongs to the paxillin family. In terms of assembly, interacts in vitro with VCL/vinculin as well as to the SH3 domain of SRC and, when tyrosine phosphorylated, to the SH2 domain of CRK. Interacts with GIT1. Interacts with NUDT16L1/SDOS. Interacts with PTK2/FAK1. Interacts with PTK2B/PYK2. Interacts with ASAP2. Interacts with unphosphorylated ITGA4. Interacts with RNF5. Interacts with PDCD10. Interacts with NEK3, the interaction is prolactin-dependent. Interacts with PTK6. Interacts with TGFB1I1. Interacts with SORBS1. Interacts with PARVB. Interacts (via LD motif 4) with PARVA/PARVIN. Interacts (via LD motif 4) with ILK. Interacts (via cytoplasmic domain) with CEACAM1; the interaction is phosphotyrosyl-dependent. Interacts with LIMA1; this complex stabilizes actin dynamics. Interacts with CD36 (via C-terminus). Interacts with TRIM15. Interacts with PAK4; PAK4 acts as a scaffold to suppport PAXI phosphorylation at Ser-272. Post-translationally, phosphorylated by MAPK1/ERK2. Phosphorylated on tyrosine residues during integrin-mediated cell adhesion, embryonic development, fibroblast transformation and following stimulation of cells by mitogens. Phosphorylation at Ser-244 by CDK5 reduces its interaction with PTK2/FAK1 in matrix-cell focal adhesions (MCFA) during oligodendrocytes (OLs) differentiation. Phosphorylation at Tyr-31 and Tyr-118 by PTK6 promote the activation of RAC1 via CRK/CrKII, thereby promoting migration and invasion. Phosphorylation at Ser-250 by SLK is required for PXN redistribution and cell motility. Phosphorylation at Ser-272 promotes focal adhesion disassembly during cell migration.

The protein localises to the cytoplasm. It localises to the cytoskeleton. It is found in the cell junction. The protein resides in the focal adhesion. Its subcellular location is the cell cortex. Its function is as follows. Cytoskeletal protein involved in actin-membrane attachment at sites of cell adhesion to the extracellular matrix (focal adhesion). Recruits other proteins such as TRIM15 to focal adhesion. The sequence is that of Paxillin from Mus musculus (Mouse).